The chain runs to 79 residues: U24-theraphotoxin-Cg1a (79 aa).

The signal sequence occupies residues 1-19 (MRVLFIIAVLALISVGCYA). Residues 20-44 (SEMKDRSSRNEVLSAIFAIEEPQER) constitute a propeptide that is removed on maturation. Disulfide bonds link cysteine 46-cysteine 61, cysteine 53-cysteine 66, and cysteine 60-cysteine 73. Tryptophan 78 is modified (tryptophan amide).

Belongs to the neurotoxin 10 (Hwtx-1) family. 35 (Jztx-27) subfamily. As to expression, expressed by the venom gland.

The protein localises to the secreted. In terms of biological role, probable ion channel inhibitor. This chain is U24-theraphotoxin-Cg1a, found in Chilobrachys guangxiensis (Chinese earth tiger tarantula).